Consider the following 484-residue polypeptide: MILTATFICFCLASAFNYFRARRQRSLIKNLKGPFTWPLMGAMHKLLFLTPINFFQRSTEYLTKYGTFSRCWVFHRLFIPLADLELSRQLLENDTHLETGYELMKDWLVGGVLMCQSEQWQKRHSLISGLFDKGNLEQLIDLSRHQTEQLLQKLAKQADQKVFDIWYTVSPIVLDLMVMTTCGAKPSEEYSKNLKDLSEIYRKRFLSLQSANRFNYWLSSPFMRKRQNRLIKRLNDEHNNLMAMHQSQNQLKIENGLDIYQLRPIPLKDHKSLLEILLESKDPQLTGEEICGELNTCNYLGYQLCSPALCFCLVTIARNPSVQQKCLDELNLAQIKDQGWDLEKLNYLDAVLHETMRLYPPQVIVGRQLKKDFPYTHSIVGDAELPCGSEIYINLYELQRNEVRYPKANHFDAQRFLDSPPELLSYSLGPRCCPARKFSMQLLKTLLAPILANFEVLPYGDEVRLDLRLVLGSSNGFQLALKPR.

Residue Cys-433 participates in heme binding.

It belongs to the cytochrome P450 family. It depends on heme as a cofactor.

The protein localises to the endoplasmic reticulum membrane. It localises to the microsome membrane. May be involved in the metabolism of insect hormones and in the breakdown of synthetic insecticides. This is Probable cytochrome P450 316a1 (Cyp316a1) from Drosophila melanogaster (Fruit fly).